Here is a 705-residue protein sequence, read N- to C-terminus: Fatty acid oxidation complex subunit alpha (705 aa).

The enoyl-CoA hydratase stretch occupies residues 1-190 (MSEQKAFNLK…KLGVVDACVP (190 aa)). A 3-hydroxyacyl-CoA dehydrogenase region spans residues 308-705 (SKVGMVGVLG…AGEGRRFYDN (398 aa)).

It in the N-terminal section; belongs to the enoyl-CoA hydratase/isomerase family. This sequence in the central section; belongs to the 3-hydroxyacyl-CoA dehydrogenase family. Heterotetramer of two alpha chains (FadJ) and two beta chains (FadI).

The protein localises to the cytoplasm. It carries out the reaction a (3S)-3-hydroxyacyl-CoA = a (2E)-enoyl-CoA + H2O. It catalyses the reaction a 4-saturated-(3S)-3-hydroxyacyl-CoA = a (3E)-enoyl-CoA + H2O. The catalysed reaction is a (3S)-3-hydroxyacyl-CoA + NAD(+) = a 3-oxoacyl-CoA + NADH + H(+). The enzyme catalyses (3S)-3-hydroxybutanoyl-CoA = (3R)-3-hydroxybutanoyl-CoA. The protein operates within lipid metabolism; fatty acid beta-oxidation. Catalyzes the formation of a hydroxyacyl-CoA by addition of water on enoyl-CoA. Also exhibits 3-hydroxyacyl-CoA epimerase and 3-hydroxyacyl-CoA dehydrogenase activities. This chain is Fatty acid oxidation complex subunit alpha, found in Vibrio vulnificus (strain CMCP6).